The sequence spans 137 residues: MVGYHQTNQKTDTGKTLTRRPVLVDHNRLPEGSRGRLAVAVAGDHPAAVQVTMTLVNDTGFDPVFSGSIAESWRQQPCTPSYCCDWEAATMLRAFPLAKKGEGRARLPSLYASFGKLGETPTHEDIIDNNRSINWPV.

Positions 1 to 16 (MVGYHQTNQKTDTGKT) are enriched in polar residues. The disordered stretch occupies residues 1-20 (MVGYHQTNQKTDTGKTLTRR).

This is Putative protein YjhV (yjhV) from Escherichia coli (strain K12).